We begin with the raw amino-acid sequence, 881 residues long: DNA replication helicase (881 aa).

90–97 contacts ATP; sequence GNAGSGKS.

Belongs to the herpesviridae helicase family. Associates with the primase and the primase-associated factor to form the helicase-primase complex.

Its subcellular location is the host nucleus. Functionally, component of the helicase/primase complex. Unwinds the DNA at the replication forks and generates single-stranded DNA for both leading and lagging strand synthesis. The primase synthesizes short RNA primers on the lagging strand that the polymerase elongates using dNTPs. Possesses helicase-like motifs and therefore may act as the helicase subunit of the complex. The polypeptide is DNA replication helicase (Homo sapiens (Human)).